Reading from the N-terminus, the 301-residue chain is 2-dehydropantoate 2-reductase (301 aa).

Residues glycine 7–glycine 12, lysine 74, asparagine 99, and alanine 123 contribute to the NADP(+) site. The Proton donor role is filled by lysine 179. Substrate-binding positions include lysine 179, asparagine 183, asparagine 187, asparagine 197, and asparagine 246–serine 249. Glutamate 261 is a binding site for NADP(+).

It belongs to the ketopantoate reductase family.

It is found in the cytoplasm. It carries out the reaction (R)-pantoate + NAD(+) = 2-dehydropantoate + NADH + H(+). The catalysed reaction is (R)-pantoate + NADP(+) = 2-dehydropantoate + NADPH + H(+). It participates in cofactor biosynthesis; coenzyme A biosynthesis. Functionally, catalyzes the NAD(P)H-dependent reduction of ketopantoate into pantoic acid. This chain is 2-dehydropantoate 2-reductase, found in Pyrococcus horikoshii (strain ATCC 700860 / DSM 12428 / JCM 9974 / NBRC 100139 / OT-3).